The following is a 485-amino-acid chain: MTNKVRTRFAPSPTGYMHVGNLRTALYAYLIAKHDNGDFILRIEDTDQERLVEGALDVIYNTLKITGLSHDEGPDIGGPVGPYVQSERRNIYIEYAEKLIEKGEAYYCFCSKERLDMLRANSEALKRPFRYDKHCIDLSKEEIDKKIAEGVPYVIRQKNPTTGSTSFHDEIYGDISVDNSELDDMILIKSDGLPTYNFANVVDDHLMGITHVVRGSEYLSSSPKYNRLYEAFGWDVPIYVHCPPIMKDEHHKLSKRNGDASFEDLMAKGYLKEAILNYIALLGWNPGGEKEVFSMEELIEAFNYRNINKAPAVFDTKKLKWMNGEYIRALSLDKFHEMALPYYEEALTRDLDTKKISELLHTRVEVLNEIPEQLDFFNNLLEYSPEMYIHKKMKTTYENSLKSLEEVLPKLEALENWTFENIKEVCMNLVKELEVKNGVVLWPIRTAVSGKQFTPGGAFEIADILGKEETLERIKIGIDKLKALQ.

Residues 11–21 (PSPTGYMHVGN) carry the 'HIGH' region motif. Cysteine 108, cysteine 110, cysteine 135, and aspartate 137 together coordinate Zn(2+). Positions 252-256 (KLSKR) match the 'KMSKS' region motif. ATP is bound at residue lysine 255.

The protein belongs to the class-I aminoacyl-tRNA synthetase family. Glutamate--tRNA ligase type 1 subfamily. In terms of assembly, monomer. Zn(2+) serves as cofactor.

Its subcellular location is the cytoplasm. The enzyme catalyses tRNA(Glu) + L-glutamate + ATP = L-glutamyl-tRNA(Glu) + AMP + diphosphate. In terms of biological role, catalyzes the attachment of glutamate to tRNA(Glu) in a two-step reaction: glutamate is first activated by ATP to form Glu-AMP and then transferred to the acceptor end of tRNA(Glu). This Clostridium botulinum (strain ATCC 19397 / Type A) protein is Glutamate--tRNA ligase.